A 183-amino-acid polypeptide reads, in one-letter code: Large ribosomal subunit protein uL6 (183 aa).

The protein belongs to the universal ribosomal protein uL6 family. Part of the 50S ribosomal subunit.

Functionally, this protein binds to the 23S rRNA, and is important in its secondary structure. It is located near the subunit interface in the base of the L7/L12 stalk, and near the tRNA binding site of the peptidyltransferase center. The protein is Large ribosomal subunit protein uL6 of Moorella thermoacetica (strain ATCC 39073 / JCM 9320).